Reading from the N-terminus, the 423-residue chain is Glycine amidinotransferase, mitochondrial (423 aa).

A mitochondrion-targeting transit peptide spans 1–43 (MLRVRCLRGGSRGAEAVHYIGSRLGGSLTGWVQRTFQSTQAAT). Ser46 and Ser49 each carry phosphoserine. Residue Asp170 participates in arginine binding. Catalysis depends on residues Asp254 and His303. Arginine is bound by residues Asp305, Arg322, Ser354, and Ser355. Lys385 is modified (N6-acetyllysine). The active-site Amidino-cysteine intermediate is Cys407.

It belongs to the amidinotransferase family. In terms of assembly, homodimer. In terms of tissue distribution, highly expressed in the kidney and pancreas, especially in the proximal tubules of the kidney, and alpha cells of the pancreatic islets (at protein level). Moderately expressed in liver hepatocytes (at protein level). Expressed in the kidney, pancreas, liver, colon, ileum, jejunum, heart and skeletal muscle. In reproductive tissues, expressed in the testis, epididymis, ovary, oviduct and uterus. Expressed throughout the brain in neurons, astrocytes and oligodendrocytes. In 12.5 dpc embryos, it is expressed in the middle part of the somites, hepatic primordium and wall of the dorsal aorta. Expressed in 15.5 dpc embryos in isolated cells throughout the central nervous system, skeletal muscles, gonad primordia, caudal somites, liver and pancreas, but not in the choroid plexus, root ganglia or kidney. Expressed in skeletal muscle, kidney, pancreas, central nervous system, liver and intestine epithelial cells, but not in epidermis, dermis, olfactory epithelium, trachea, lung, stomach or heart in 18.5 dpc embryos.

The protein localises to the mitochondrion inner membrane. The enzyme catalyses L-arginine + glycine = guanidinoacetate + L-ornithine. It catalyses the reaction 4-aminobutanoate + L-arginine = 4-guanidinobutanoate + L-ornithine. The catalysed reaction is beta-alanine + L-arginine = 3-guanidinopropanoate + L-ornithine. It carries out the reaction taurine + L-arginine = taurocyamine + L-ornithine. The protein operates within amine and polyamine biosynthesis; creatine biosynthesis; creatine from L-arginine and glycine: step 1/2. Functionally, transamidinase that catalyzes the transfer of the amidino group of L-arginine onto the amino moiety of acceptor metabolites such as glycine, beta-alanine, gamma-aminobutyric acid (GABA) and taurine yielding the corresponding guanidine derivatives. Catalyzes the rate-limiting step of creatine biosynthesis, namely the transfer of the amidino group from L-arginine to glycine to generate guanidinoacetate, which is then methylated by GAMT to form creatine. Provides creatine as a source for ATP generation in tissues with high energy demands, in particular skeletal muscle, heart and brain. This is Glycine amidinotransferase, mitochondrial (Gatm) from Rattus norvegicus (Rat).